A 3159-amino-acid chain; its full sequence is E1A-binding protein p400 (3159 aa).

Polar residues predominate over residues 1 to 16; sequence MHHGTGPQNVQHQLQR. Disordered stretches follow at residues 1 to 65, 125 to 154, 212 to 261, 282 to 359, 545 to 594, 633 to 658, and 684 to 770; these read MHHG…MNRS, SPLS…RAGA, PGTP…HITT, VLQG…PASP, LMPT…PQLP, QQPN…AQLA, and TRLP…SQDT. Pro residues predominate over residues 31–41; the sequence is HPNPPPSPAAP. Low complexity predominate over residues 42–55; it reads FAPSASPSAPQSPS. Ser-53 is modified (phosphoserine). Residues 56–65 show a composition bias toward polar residues; the sequence is YQIQQLMNRS. Low complexity-rich tracts occupy residues 125-137 and 237-256; these read SPLS…QSPT and LGPQ…LASP. Ser-135 is modified (phosphoserine). Ser-315 and Ser-321 each carry phosphoserine. Residues 558–571 are compositionally biased toward low complexity; the sequence is QAAQLAGQRQSQQQ. A compositionally biased stretch (polar residues) spans 572–585; sequence YDPSTGPPVQNAAS. Composition is skewed to pro residues over residues 637–653 and 689–698; these read VPIP…PPSQ and DPAPPCPRPL. The span at 699 to 711 shows a compositional bias: low complexity; the sequence is PTSSTSSLAPVSG. Composition is skewed to polar residues over residues 725–742 and 751–760; these read NRPS…TSRT and TKPQSPAQNA. Phosphoserine is present on residues Ser-736 and Ser-755. Low complexity predominate over residues 761–770; sequence TSSQDSSQDT. The 73-residue stretch at 799–871 folds into the HSA domain; the sequence is LPKLQEAPRP…EQSRLRRIAA (73 aa). Disordered stretches follow at residues 915-967 and 997-1024; these read ELRP…GVVD and SSQW…GDRE. Phosphoserine occurs at positions 928 and 941. Phosphothreonine is present on Thr-945. Composition is skewed to acidic residues over residues 945–962 and 1008–1019; these read TDDE…EEAN and EDTSGEEDADDC. Residues 951-1365 are interactions with RUVBL1 and RUVBL2; that stretch reads DEEETIEEEE…NVLSILVRLQ (415 aa). Ser-1011 carries the phosphoserine modification. The Helicase ATP-binding domain occupies 1103–1268; the sequence is AKLYRKNLNG…WTMVHFLVPG (166 aa). 1116–1123 is an ATP binding site; it reads DEAGLGKT. The DEAH box-like motif lies at 1219 to 1222; sequence DEMQ. A disordered region spans residues 1467 to 1582; that stretch reads VQYGQKPEGR…QAPSHAAGQS (116 aa). At Lys-1472 the chain carries N6-acetyllysine. 2 stretches are compositionally biased toward low complexity: residues 1481–1498 and 1538–1565; these read PSTH…SAAP and PASA…ASTP. Phosphoserine is present on residues Ser-1547, Ser-1728, and Ser-1732. The interval 1787-1807 is disordered; that stretch reads GSLDGRRGKEAGPAHSYTSSS. Positions 1789–1798 are enriched in basic and acidic residues; that stretch reads LDGRRGKEAG. Positions 1899–2056 constitute a Helicase C-terminal domain; that stretch reads KLEALAILLQ…GNDYSMAFLT (158 aa). Disordered regions lie at residues 2119 to 2144 and 2287 to 2311; these read KSAQ…PCDE and KERK…GEAV. 2 positions are modified to N6-acetyllysine: Lys-2349 and Lys-2356. One can recognise a Myb-like domain in the interval 2360 to 2429; that stretch reads EPGQDNPEWL…QCRNRYENVI (70 aa). Disordered regions lie at residues 2524 to 2602 and 2665 to 2688; these read KEKK…AQPA and TPGG…GSPA. An interaction with ZNF42 region spans residues 2524 to 2789; sequence KEKKALADQQ…QQQQQTTTTS (266 aa). Residues 2530 to 2540 show a composition bias toward low complexity; the sequence is ADQQKAQQPAV. Pro residues-rich tracts occupy residues 2541–2563 and 2572–2589; these read AQPP…PLPQ and PAGP…PQTQ. Over residues 2590-2602 the composition is skewed to low complexity; the sequence is PQPVQAPAKAQPA. Phosphoserine is present on Ser-2686. Position 2813 is a phosphothreonine (Thr-2813). Disordered stretches follow at residues 2821–2869 and 3115–3159; these read QKQK…TAPR and APLQ…PPCQ. Positions 2828–2843 are enriched in pro residues; it reads PPQPPPPQAQSAPPQP. The span at 2844–2866 shows a compositional bias: low complexity; the sequence is TAQVQVQTSQPPQQQSPQLTTVT. Over residues 3129-3140 the composition is skewed to polar residues; it reads PASSDSPSQQPK.

The protein belongs to the SNF2/RAD54 helicase family. SWR1 subfamily. Component of the NuA4 histone acetyltransferase complex which contains the catalytic subunit KAT5/TIP60 and the subunits EP400, TRRAP/PAF400, BRD8/SMAP, EPC1, DMAP1/DNMAP1, RUVBL1/TIP49, RUVBL2, ING3, actin, ACTL6A/BAF53A, MORF4L1/MRG15, MORF4L2/MRGX, MRGBP, YEATS4/GAS41, VPS72/YL1 and MEAF6. May also participate in the formation of NuA4 related complexes which lack the KAT5/TIP60 catalytic subunit, but which include the SWI/SNF related protein SRCAP. The NuA4 complex interacts with MYC and the adenovirus E1A protein. EP400 interacts with TRRAP, RUVBL1 and RUVBL2. Component of a SWR1-like complex. Interacts with ZNF42. Interacts with PHF5A. Interacts with human cytomegalovirus UL27. Interacts with human adenovirus 5 E1A protein; this interaction stabilizes MYC. In terms of tissue distribution, ubiquitously expressed.

The protein resides in the nucleus. In terms of biological role, component of the NuA4 histone acetyltransferase complex which is involved in transcriptional activation of select genes principally by acetylation of nucleosomal histones H4 and H2A. This modification may both alter nucleosome - DNA interactions and promote interaction of the modified histones with other proteins which positively regulate transcription. May be required for transcriptional activation of E2F1 and MYC target genes during cellular proliferation. The NuA4 complex ATPase and helicase activities seem to be, at least in part, contributed by the association of RUVBL1 and RUVBL2 with EP400. May regulate ZNF42 transcription activity. Component of a SWR1-like complex that specifically mediates the removal of histone H2A.Z/H2AZ1 from the nucleosome. The protein is E1A-binding protein p400 (EP400) of Homo sapiens (Human).